Here is a 478-residue protein sequence, read N- to C-terminus: Isoeugenol monooxygenase (478 aa).

Residues H167, H218, H282, and H471 each coordinate Fe cation.

It belongs to the carotenoid oxygenase family. Fe(2+) is required as a cofactor.

It carries out the reaction (E)-isoeugenol + O2 = vanillin + acetaldehyde. Inhibited by Co(2+), Ni(2+) and Zn(2+), which may inhibit enzyme activity by replacing iron in the catalytic residues. Inhibited by incubation with high concentrations of the iron chelators 1,10-phenanthroline and Tiron. However, iron is not completely removed by the chelators, suggesting that iron is tightly bound to the enzyme. In terms of biological role, involved in isoeugenol degradation. Catalyzes the oxidative cleavage of the side chain double-bond of isoeugenol to form vanillin and acetaldehyde. This Pseudomonas nitroreducens protein is Isoeugenol monooxygenase.